The chain runs to 147 residues: UPF0178 protein VS_2364 (147 aa).

Belongs to the UPF0178 family.

The protein is UPF0178 protein VS_2364 of Vibrio atlanticus (strain LGP32) (Vibrio splendidus (strain Mel32)).